We begin with the raw amino-acid sequence, 247 residues long: Transmembrane protein 69 (247 aa).

5 helical membrane passes run 97–117 (ALCVTLAGLIPFVAPPLVMLM), 122–142 (IPILAFTQMAYGASFLSFLGG), 159–179 (YLNLASSAAPLFFSWFAFLIS), 185–205 (AIVTVIMGMGVAFHLELFLLP), and 216–236 (IVVTLLATFSFIITLVVKSSF).

The protein resides in the membrane. This chain is Transmembrane protein 69 (TMEM69), found in Homo sapiens (Human).